We begin with the raw amino-acid sequence, 212 residues long: Uridine kinase (212 aa).

13 to 20 (GGSGSGKT) lines the ATP pocket.

It belongs to the uridine kinase family.

The protein resides in the cytoplasm. The enzyme catalyses uridine + ATP = UMP + ADP + H(+). The catalysed reaction is cytidine + ATP = CMP + ADP + H(+). It participates in pyrimidine metabolism; CTP biosynthesis via salvage pathway; CTP from cytidine: step 1/3. The protein operates within pyrimidine metabolism; UMP biosynthesis via salvage pathway; UMP from uridine: step 1/1. The protein is Uridine kinase of Bacillus anthracis (strain A0248).